Reading from the N-terminus, the 99-residue chain is UPF0235 protein Avin_03050 (99 aa).

Residues 66 to 99 (VSLESGESNRQKRVRIRRPRQLPALPGLAPRPDA) form a disordered region. Residues 76-85 (QKRVRIRRPR) are compositionally biased toward basic residues.

It belongs to the UPF0235 family.

This is UPF0235 protein Avin_03050 from Azotobacter vinelandii (strain DJ / ATCC BAA-1303).